The primary structure comprises 432 residues: Mitochondrial distribution and morphology protein 12 (432 aa).

In terms of domain architecture, SMP-LTD spans 1-432 (MSIEVDWRAA…VFPSFWTFLI (432 aa)). 2 disordered regions span residues 182-273 (WTDP…PRMR) and 354-377 (QQEARGQDDRPWSSADPTASPKRQ). A compositionally biased stretch (low complexity) spans 214–234 (TSNPTSRPSTSSTLPSHPSAS). Basic and acidic residues-rich tracts occupy residues 243–253 (TGKEHGSLAED) and 355–364 (QEARGQDDRP).

It belongs to the MDM12 family. In terms of assembly, component of the ER-mitochondria encounter structure (ERMES) or MDM complex, composed of mmm1, mdm10, mdm12 and mdm34. A mmm1 homodimer associates with one molecule of mdm12 on each side in a pairwise head-to-tail manner, and the SMP-LTD domains of mmm1 and mdm12 generate a continuous hydrophobic tunnel for phospholipid trafficking.

It is found in the mitochondrion outer membrane. The protein localises to the endoplasmic reticulum membrane. Functionally, component of the ERMES/MDM complex, which serves as a molecular tether to connect the endoplasmic reticulum (ER) and mitochondria. Components of this complex are involved in the control of mitochondrial shape and protein biogenesis, and function in nonvesicular lipid trafficking between the ER and mitochondria. Mdm12 is required for the interaction of the ER-resident membrane protein mmm1 and the outer mitochondrial membrane-resident beta-barrel protein mdm10. The mdm12-mmm1 subcomplex functions in the major beta-barrel assembly pathway that is responsible for biogenesis of all mitochondrial outer membrane beta-barrel proteins, and acts in a late step after the SAM complex. The mdm10-mdm12-mmm1 subcomplex further acts in the TOM40-specific pathway after the action of the mdm12-mmm1 complex. Essential for establishing and maintaining the structure of mitochondria and maintenance of mtDNA nucleoids. This Aspergillus oryzae (strain ATCC 42149 / RIB 40) (Yellow koji mold) protein is Mitochondrial distribution and morphology protein 12.